The primary structure comprises 125 residues: Small ribosomal subunit protein uS12 (125 aa).

The interval 1-28 (MPTINQLVRKGREKVKKKSKAPALEGNP) is disordered. Residues 9-20 (RKGREKVKKKSK) are compositionally biased toward basic residues. Residue D89 is modified to 3-methylthioaspartic acid. The segment at 104–125 (AAGVKDRKQSRSKYGTKRPKEK) is disordered. The segment covering 113-125 (SRSKYGTKRPKEK) has biased composition (basic residues).

Belongs to the universal ribosomal protein uS12 family. Part of the 30S ribosomal subunit. Contacts proteins S8 and S17. May interact with IF1 in the 30S initiation complex.

With S4 and S5 plays an important role in translational accuracy. Its function is as follows. Interacts with and stabilizes bases of the 16S rRNA that are involved in tRNA selection in the A site and with the mRNA backbone. Located at the interface of the 30S and 50S subunits, it traverses the body of the 30S subunit contacting proteins on the other side and probably holding the rRNA structure together. The combined cluster of proteins S8, S12 and S17 appears to hold together the shoulder and platform of the 30S subunit. The polypeptide is Small ribosomal subunit protein uS12 (Persephonella marina (strain DSM 14350 / EX-H1)).